We begin with the raw amino-acid sequence, 37 residues long: Large ribosomal subunit protein bL36 (37 aa).

It belongs to the bacterial ribosomal protein bL36 family.

This Sulfurimonas denitrificans (strain ATCC 33889 / DSM 1251) (Thiomicrospira denitrificans (strain ATCC 33889 / DSM 1251)) protein is Large ribosomal subunit protein bL36.